The chain runs to 152 residues: uncharacterized protein (152 aa).

This is an uncharacterized protein from Brachyspira hyodysenteriae (Treponema hyodysenteriae).